We begin with the raw amino-acid sequence, 388 residues long: Succinate--CoA ligase [ADP-forming] subunit beta (388 aa).

The ATP-grasp domain occupies 9 to 244 (KQLFAQYGLP…PAQNDAREAH (236 aa)). Residues K46, 53–55 (GRG), E99, T102, and E107 contribute to the ATP site. N199 and D213 together coordinate Mg(2+). Residues N264 and 321–323 (GIV) each bind substrate.

The protein belongs to the succinate/malate CoA ligase beta subunit family. Heterotetramer of two alpha and two beta subunits. Requires Mg(2+) as cofactor.

It carries out the reaction succinate + ATP + CoA = succinyl-CoA + ADP + phosphate. It catalyses the reaction GTP + succinate + CoA = succinyl-CoA + GDP + phosphate. It participates in carbohydrate metabolism; tricarboxylic acid cycle; succinate from succinyl-CoA (ligase route): step 1/1. In terms of biological role, succinyl-CoA synthetase functions in the citric acid cycle (TCA), coupling the hydrolysis of succinyl-CoA to the synthesis of either ATP or GTP and thus represents the only step of substrate-level phosphorylation in the TCA. The beta subunit provides nucleotide specificity of the enzyme and binds the substrate succinate, while the binding sites for coenzyme A and phosphate are found in the alpha subunit. This Edwardsiella ictaluri (strain 93-146) protein is Succinate--CoA ligase [ADP-forming] subunit beta.